Here is a 440-residue protein sequence, read N- to C-terminus: Thymidine phosphorylase (440 aa).

The protein belongs to the thymidine/pyrimidine-nucleoside phosphorylase family. As to quaternary structure, homodimer.

It carries out the reaction thymidine + phosphate = 2-deoxy-alpha-D-ribose 1-phosphate + thymine. It participates in pyrimidine metabolism; dTMP biosynthesis via salvage pathway; dTMP from thymine: step 1/2. Its function is as follows. The enzymes which catalyze the reversible phosphorolysis of pyrimidine nucleosides are involved in the degradation of these compounds and in their utilization as carbon and energy sources, or in the rescue of pyrimidine bases for nucleotide synthesis. The protein is Thymidine phosphorylase of Burkholderia pseudomallei (strain 1106a).